Consider the following 185-residue polypeptide: Putative manganese efflux pump MntP (185 aa).

6 helical membrane-spanning segments follow: residues 4–24, 40–60, 64–84, 108–128, 134–154, and 165–185; these read LFIG…TDAF, IFHI…AGMA, LLSG…LFIL, LLLF…SLGM, FLAV…GLLA, and YSEA…LLPV.

The protein belongs to the MntP (TC 9.B.29) family.

The protein localises to the cell membrane. Probably functions as a manganese efflux pump. This is Putative manganese efflux pump MntP from Bacillus velezensis (strain DSM 23117 / BGSC 10A6 / LMG 26770 / FZB42) (Bacillus amyloliquefaciens subsp. plantarum).